The sequence spans 256 residues: MSHVSICLLSEAGADPGALSILADRWGLVSDDQAVMALVLTAERLELRKRDEPKLGGIYVDFVSGTQAHRRKFGGGRGEAVAKAVGIKKGYLPRVVDATAGLGRDAFVLAALGCQVQMLERNPVVAALLDDGLRRGYLDAEIGPWLRERLTLLHASSLTALVAIEPCPEVVYLDPMYPHRQKSALVKKEMRVFQSLVGADNDADGLLAPARALATKRVVVKRPDYAEPLAGVAAQAAVVTKSHRFDIYPSSVTPPR.

S-adenosyl-L-methionine-binding positions include 104–105 (RD), 120–121 (ER), 156–157 (SS), and Asp-174.

Belongs to the methyltransferase superfamily. RsmJ family.

It is found in the cytoplasm. The enzyme catalyses guanosine(1516) in 16S rRNA + S-adenosyl-L-methionine = N(2)-methylguanosine(1516) in 16S rRNA + S-adenosyl-L-homocysteine + H(+). In terms of biological role, specifically methylates the guanosine in position 1516 of 16S rRNA. The protein is Ribosomal RNA small subunit methyltransferase J of Yersinia pseudotuberculosis serotype O:3 (strain YPIII).